The chain runs to 803 residues: MTFNHKKMEPKWQQYWSEHNTFKTTEDKNKENFYALDMFPYPSGAGLHVGHPEGYTATDILSRMKRMQGKNVLHPIGWDAFGLPAEQYAIDTGNDPEEFTALNIANFTRQIKSLGFSYDWDREINTTDPEYYKWTQWIFEKLYENGLAYEAEIAVNWCPALGTVLANEEVIDGKSERGGFPVFRKPMRQWMLKITAYADRLLDDLDLVDWPENIKDMQRNWIGRSEGAEVTFKIKDSDETFNVFTTRPDTLFGATYTVFAPEHELIEKITTPEQKEAVEAYKKQVELKSELERTDLAKDKTGVFTGAYAINPINGEEVPIWIADYVLIQYGTGAIMAVPAHDERDFEFAQQFGLNIRPVLEGGDVTKEAFTGDGPHINSDFLNGLAKAEAITAAIDWLEKEGIGSRKITYRLRDWLFSRQRYWGEPIPVIHWEDGETTLVPEEELPLLLPKATEIKPSGTGESPLANLHDWVNVTDENGRKGRRETNTMPQWAGSSWYFLRYIDPKNSEAIADKEKLAEWLPVDVYIGGAEHAVLHLLYARFWHKFLYDIGVVPTKEPFQKLFNQGMILGENNEKMSKSRGNVVNPDEVVEKYGADTLRLYEMFMGPLEASIAWNENGLEGARKFLDRIWRLLVTEEGTLAEKVTTDANANLEKAYHHMVKTVTNHYENLRFNTGISQLMIFINEAYKQDTIPKQYVEGFVQLLSPIAPHLAEELWEILGHTETISYVAWPTYDETKLVEDEVEIVLQVNGKVKSKITVAKSLGKEELEKIAQEDNKMKENLEGKTIRKVIVVPGKLVNIVAN.

Residues 40–51 carry the 'HIGH' region motif; that stretch reads PYPSGAGLHVGH. The short motif at 575-579 is the 'KMSKS' region element; that stretch reads KMSKS. Residue lysine 578 participates in ATP binding.

The protein belongs to the class-I aminoacyl-tRNA synthetase family.

The protein localises to the cytoplasm. It catalyses the reaction tRNA(Leu) + L-leucine + ATP = L-leucyl-tRNA(Leu) + AMP + diphosphate. The protein is Leucine--tRNA ligase of Listeria monocytogenes serovar 1/2a (strain ATCC BAA-679 / EGD-e).